A 437-amino-acid chain; its full sequence is Protein WVD2-like 5 (437 aa).

3 disordered regions span residues 1-22 (MDPE…GGLA), 38-210 (TVDT…FSFK), and 254-437 (LRKS…AVEH). Residues 41–55 (TTSESQNENSANSST) show a composition bias toward low complexity. A compositionally biased stretch (basic and acidic residues) spans 58–86 (TIEHVKEAAEGTQVEHVDDSKCMKGEKAQ). Residues 121–140 (SNGSVAPNVQTTNPLKSKSF) are compositionally biased toward polar residues. The span at 151–167 (GKHDSAPAESADGEKVK) shows a compositional bias: basic and acidic residues. A Phosphoserine modification is found at Ser-208. Basic residues predominate over residues 288-297 (KSPKLGRKKT). Residues 360–371 (PAPAKAAIIPAK) show a composition bias toward low complexity. Positions 408–437 (EDSHETVSPRMNEDRADKSIEVSEAVAVEH) are enriched in basic and acidic residues. Ser-415 is subject to Phosphoserine.

The protein belongs to the TPX2 family. As to expression, expressed in seedlings.

The protein resides in the cytoplasm. It is found in the cytoskeleton. Its function is as follows. Microtubule-associated protein (MAP) that regulates the orientation of interphase cortical microtubules. This Arabidopsis thaliana (Mouse-ear cress) protein is Protein WVD2-like 5.